Consider the following 375-residue polypeptide: G-protein coupled estrogen receptor 1 (375 aa).

Met1 carries the post-translational modification N-acetylmethionine. At 1–62 (MAATTPAQDV…QQYVIALFLS (62 aa)) the chain is on the extracellular side. N-linked (GlcNAc...) asparagine glycans are attached at residues Asn32 and Asn44. Residues 63-84 (CLYTIFLFPIGFVGNILILVVN) traverse the membrane as a helical segment. Residues 85 to 96 (ISFREKMTIPDL) lie on the Cytoplasmic side of the membrane. A helical transmembrane segment spans residues 97 to 120 (YFINLAAADLILVADSLIEVFNLD). Over 121–132 (EQYYDIAVLCTF) the chain is Extracellular. Cys130 and Cys207 form a disulfide bridge. The helical transmembrane segment at 133-153 (MSLFLQINMYSSVFFLTWMSF) threads the bilayer. At 154–175 (DRYLALAKAMRCGLFRTKHHAR) the chain is on the cytoplasmic side. Residues 176–194 (LSCGLIWMASVSATLVPFT) form a helical membrane-spanning segment. At 195–220 (AVHLRHTEEACFCFADVREVQWLEVT) the chain is on the extracellular side. Residues 221-236 (LGFIVPFAIIGLCYSL) form a helical membrane-spanning segment. Residues 237-259 (IVRALIRAHRHRGLRPRRQKALR) are Cytoplasmic-facing. A helical membrane pass occupies residues 260–280 (MIFAVVLVFFICWLPENVFIS). At 281–306 (VHLLQWAQPGDTPCKQSFRHAYPLTG) the chain is on the extracellular side. Residues 307-327 (HIVNLAAFSNSCLSPLIYSFL) form a helical membrane-spanning segment. At 328–375 (GETFRDKLRLYVAQKTSLPALNRFCHATLKAVIPDSTEQSDVKFSSAV) the chain is on the cytoplasmic side.

The protein belongs to the G-protein coupled receptor 1 family. In terms of assembly, homodimer. Heterodimer; heterodimerizes with other G-protein-coupled receptor (GPCRs) like CRHR1, HTR1A and PAQR8. Interacts with RAMP3; the interaction confers proper subcellular localization and function in cardioprotection. Interacts with KRT7 and KRT8. Interacts with EGFR; the interaction increases after agonist-induced stimulation in cancer-associated fibroblasts (CAF). Interacts with EGFR and ESR1. Interacts (via C-terminus tail motif) with DLG4 (via N-terminus tandem pair of PDZ domains); the interaction is direct and induces the increase of GPER1 protein levels residing at the plasma membrane surface in a estradiol-independent manner. Ubiquitinated; ubiquitination occurs at the plasma membrane and leads to proteasome-mediated degradation. Post-translationally, glycosylated. Expressed in the brain. Expressed in neurons of the hippocampus, hypothalamic paraventricular nucleus (PVN), supraoptic nucleus (SON) and the median eminence. Expressed in magnocellular neurosecretory cells (MNCs) which secrete oxytocin but not in MNCs which secrete vasopressin. Expressed in glial cells. Expressed in the nucleus ambiguous. Expressed in epithelial cells, in pachytene spermatocytes (PS) (at protein level). Expressed strongly in vascular endothelial cells and poorly in vascular smooth muscle cells (VSMC). Expressed in the brain, lung, pituitary gland, adrenal medulla, renal pelvis and ovary. Expressed in CA1 hippocampus. Expressed weakly in heart, skeletal muscle and kidney.

It is found in the nucleus. The protein localises to the cytoplasm. It localises to the perinuclear region. Its subcellular location is the cytoskeleton. The protein resides in the cytoplasmic vesicle membrane. It is found in the cell membrane. The protein localises to the basolateral cell membrane. It localises to the endoplasmic reticulum membrane. Its subcellular location is the early endosome. The protein resides in the recycling endosome. It is found in the golgi apparatus. The protein localises to the trans-Golgi network. It localises to the golgi apparatus membrane. Its subcellular location is the cell projection. The protein resides in the dendrite. It is found in the dendritic spine membrane. The protein localises to the axon. It localises to the postsynaptic density. Its subcellular location is the mitochondrion membrane. In terms of biological role, G-protein coupled estrogen receptor that binds to 17-beta-estradiol (E2) with high affinity, leading to rapid and transient activation of numerous intracellular signaling pathways. Stimulates cAMP production, calcium mobilization and tyrosine kinase Src inducing the release of heparin-bound epidermal growth factor (HB-EGF) and subsequent transactivation of the epidermal growth factor receptor (EGFR), activating downstream signaling pathways such as PI3K/Akt and ERK/MAPK. Mediates pleiotropic functions among others in the cardiovascular, endocrine, reproductive, immune and central nervous systems. Has a role in cardioprotection by reducing cardiac hypertrophy and perivascular fibrosis in a RAMP3-dependent manner. Regulates arterial blood pressure by stimulating vasodilation and reducing vascular smooth muscle and microvascular endothelial cell proliferation. Plays a role in blood glucose homeostasis contributing to the insulin secretion response by pancreatic beta cells. Triggers mitochondrial apoptosis during pachytene spermatocyte differentiation. Stimulates uterine epithelial cell proliferation. Enhances uterine contractility in response to oxytocin. Contributes to thymic atrophy by inducing apoptosis. Attenuates TNF-mediated endothelial expression of leukocyte adhesion molecules. Promotes neuritogenesis in developing hippocampal neurons. Plays a role in acute neuroprotection against NMDA-induced excitotoxic neuronal death. Increases firing activity and intracellular calcium oscillations in luteinizing hormone-releasing hormone (LHRH) neurons. Inhibits early osteoblast proliferation at growth plate during skeletal development. Inhibits mature adipocyte differentiation and lipid accumulation. Involved in the recruitment of beta-arrestin 2 ARRB2 at the plasma membrane in epithelial cells. Also functions as a receptor for aldosterone mediating rapid regulation of vascular contractibility through the PI3K/ERK signaling pathway. Involved in cancer progression regulation. Stimulates cancer-associated fibroblast (CAF) proliferation by a rapid genomic response through the EGFR/ERK transduction pathway. Associated with EGFR, may act as a transcription factor activating growth regulatory genes (c-fos, cyclin D1). Promotes integrin alpha-5/beta-1 and fibronectin (FN) matrix assembly in breast cancer cells. The protein is G-protein coupled estrogen receptor 1 (Gper1) of Rattus norvegicus (Rat).